A 226-amino-acid polypeptide reads, in one-letter code: Deoxyribose-phosphate aldolase (226 aa).

The active-site Proton donor/acceptor is the Asp-94. Lys-156 serves as the catalytic Schiff-base intermediate with acetaldehyde. Lys-185 (proton donor/acceptor) is an active-site residue.

It belongs to the DeoC/FbaB aldolase family. DeoC type 1 subfamily.

The protein resides in the cytoplasm. It catalyses the reaction 2-deoxy-D-ribose 5-phosphate = D-glyceraldehyde 3-phosphate + acetaldehyde. It participates in carbohydrate degradation; 2-deoxy-D-ribose 1-phosphate degradation; D-glyceraldehyde 3-phosphate and acetaldehyde from 2-deoxy-alpha-D-ribose 1-phosphate: step 2/2. Its function is as follows. Catalyzes a reversible aldol reaction between acetaldehyde and D-glyceraldehyde 3-phosphate to generate 2-deoxy-D-ribose 5-phosphate. This is Deoxyribose-phosphate aldolase from Burkholderia orbicola (strain MC0-3).